The primary structure comprises 504 residues: Arabinose import ATP-binding protein AraG (504 aa).

ABC transporter domains are found at residues 8 to 243 (LSFR…MVGR) and 256 to 499 (YGEE…MPKV). 40–47 (GENGAGKS) serves as a coordination point for ATP.

It belongs to the ABC transporter superfamily. Arabinose importer (TC 3.A.1.2.2) family. In terms of assembly, the complex is composed of two ATP-binding proteins (AraG), two transmembrane proteins (AraH) and a solute-binding protein (AraF).

The protein localises to the cell inner membrane. It carries out the reaction L-arabinose(out) + ATP + H2O = L-arabinose(in) + ADP + phosphate + H(+). In terms of biological role, part of the ABC transporter complex AraFGH involved in arabinose import. Responsible for energy coupling to the transport system. The protein is Arabinose import ATP-binding protein AraG of Shigella boydii serotype 4 (strain Sb227).